Consider the following 571-residue polypeptide: Potassium-transporting ATPase potassium-binding subunit (571 aa).

10 consecutive transmembrane segments (helical) span residues 7–27 (LQFAALIAVLLLTAPALGGYL), 66–86 (TYALSVLAFSVMSFLLLYGIA), 137–157 (GLAVQNFVSASAGMCVLAALI), 188–208 (FVVAILLVSQGVIQNLHGFIV), 255–275 (IGNFVENWAILIIPFALCFAF), 286–306 (WAVLAIMGIIWIGMSVAAMSF), 390–410 (VGLNGLLVMAILAVFIAGLMV), 430–450 (TLYILAMPIALLSFAAASVLI), 497–517 (IGVAMLIGRFFLIIPVLAIAG), and 538–558 (LFVGLVIGVVLIVGGLTFFPA).

It belongs to the KdpA family. In terms of assembly, the system is composed of three essential subunits: KdpA, KdpB and KdpC.

It is found in the cell membrane. Its function is as follows. Part of the high-affinity ATP-driven potassium transport (or Kdp) system, which catalyzes the hydrolysis of ATP coupled with the electrogenic transport of potassium into the cytoplasm. This subunit binds the extracellular potassium ions and delivers the ions to the membrane domain of KdpB through an intramembrane tunnel. This chain is Potassium-transporting ATPase potassium-binding subunit, found in Mycobacterium bovis (strain ATCC BAA-935 / AF2122/97).